The sequence spans 334 residues: Cytosolic Fe-S cluster assembly factor NBP35 (334 aa).

Residues cysteine 33, cysteine 47, cysteine 50, and cysteine 56 each coordinate [4Fe-4S] cluster. Glycine 86–serine 93 is an ATP binding site. Cysteine 259 and cysteine 262 together coordinate [4Fe-4S] cluster.

The protein belongs to the Mrp/NBP35 ATP-binding proteins family. NUBP1/NBP35 subfamily. In terms of assembly, heterotetramer of 2 NBP35 and 2 CFD1 chains. [4Fe-4S] cluster serves as cofactor.

It localises to the cytoplasm. It is found in the nucleus. Its function is as follows. Component of the cytosolic iron-sulfur (Fe/S) protein assembly (CIA) machinery. Required for maturation of extramitochondrial Fe-S proteins. The NBP35-CFD1 heterotetramer forms a Fe-S scaffold complex, mediating the de novo assembly of an Fe-S cluster and its transfer to target apoproteins. Required for biogenesis and export of both ribosomal subunits, which may reflect a role in assembly of the Fe/S clusters in RLI1, a protein which performs rRNA processing and ribosome export. The chain is Cytosolic Fe-S cluster assembly factor NBP35 from Candida glabrata (strain ATCC 2001 / BCRC 20586 / JCM 3761 / NBRC 0622 / NRRL Y-65 / CBS 138) (Yeast).